The primary structure comprises 485 residues: UBX domain-containing protein 11 (485 aa).

Residues 1 to 26 form a disordered region; the sequence is MSSPLASLSKTRKVPLESEPVNPGRR. Positions 67–143 form a coiled coil; that stretch reads HDSELLTSMA…VGEMERFLND (77 aa). The 65-residue stretch at 224 to 288 folds into the SEP domain; that stretch reads LEPIPLKLYR…VSDLRNQVYP (65 aa). The region spanning 386 to 463 is the UBX domain; the sequence is PVPPLSMLRI…GLVPNATLLL (78 aa). Residues S479 and S483 each carry the phosphoserine modification.

Interacts with GNA12, GNA13, RND1, RND2 and RND3. In terms of tissue distribution, strongly expressed in testis. Also expressed in lung, brain and thymus.

It is found in the cytoplasm. Its subcellular location is the cytoskeleton. May be involved in the reorganization of actin cytoskeleton mediated by RND1, RND2 and RND3. Promotes RHOA activation mediated by GNA12 and GNA13. This Rattus norvegicus (Rat) protein is UBX domain-containing protein 11 (Ubxn11).